A 200-amino-acid chain; its full sequence is HTH-type transcriptional regulator BetI (200 aa).

The region spanning 8-68 (DIRKPQLVQA…ETMREILRQL (61 aa)) is the HTH tetR-type domain. Positions 31–50 (SIALISKEAGVSTGIINHYF) form a DNA-binding region, H-T-H motif.

It participates in amine and polyamine biosynthesis; betaine biosynthesis via choline pathway [regulation]. Repressor involved in the biosynthesis of the osmoprotectant glycine betaine. It represses transcription of the choline transporter BetT and the genes of BetAB involved in the synthesis of glycine betaine. This Vibrio atlanticus (strain LGP32) (Vibrio splendidus (strain Mel32)) protein is HTH-type transcriptional regulator BetI.